A 556-amino-acid chain; its full sequence is MSVSAFNRRWAAVILEALTRHGVRHVCIAPGSRSTPLTLAAAENPAFIHHTHFDERGLGHLALGLAKVSQQPVAVIVTSGTAVANLYPALIEAGLTGEKLILLTADRPPELIDCGANQAIRQAGMFASHPSQTLSLPRPTQDIPARWLVSTIDNALAMLHAGALHINCPFAEPLYGDMNDTGLVWQQRLGDWWQDEKPWLREARRLASDKQRDWFFWRQKRGVVVAGRMSAEEGKKVAQWAQTLGWPLIGDVLSQTGQPLPCADLWLGNAKAVTELQQAQIVVQLGSSLTGKRLLQWQATCEPEEYWVIDNIEGRLDPAHHRGRRLVAKIADWLELHPAEKRKPWCVEIPRLAELAWQRVVAQRDTFGEAQLAHRIRDYLPEQGQLFVGNSLVVRLIDALSQLPAGYPVYSNRGASGIDGLLSTAAGVQRASAKSTLAIVGDLSALYDLNALALLRQVSAPFVLIVVNNNGGQIFSLLPTPQSKRERFYLMPQNVHFDHAAAMFNLRYHRPENWEELESALAGAWRTPATTVIELVVNDTDGAQTLQQLLAQVSHL.

This sequence belongs to the TPP enzyme family. MenD subfamily. As to quaternary structure, homodimer. Mg(2+) is required as a cofactor. The cofactor is Mn(2+). It depends on thiamine diphosphate as a cofactor.

It carries out the reaction isochorismate + 2-oxoglutarate + H(+) = 5-enolpyruvoyl-6-hydroxy-2-succinyl-cyclohex-3-ene-1-carboxylate + CO2. It functions in the pathway quinol/quinone metabolism; 1,4-dihydroxy-2-naphthoate biosynthesis; 1,4-dihydroxy-2-naphthoate from chorismate: step 2/7. Its pathway is quinol/quinone metabolism; menaquinone biosynthesis. Catalyzes the thiamine diphosphate-dependent decarboxylation of 2-oxoglutarate and the subsequent addition of the resulting succinic semialdehyde-thiamine pyrophosphate anion to isochorismate to yield 2-succinyl-5-enolpyruvyl-6-hydroxy-3-cyclohexene-1-carboxylate (SEPHCHC). In Salmonella paratyphi B (strain ATCC BAA-1250 / SPB7), this protein is 2-succinyl-5-enolpyruvyl-6-hydroxy-3-cyclohexene-1-carboxylate synthase.